The sequence spans 343 residues: Ribosomal RNA small subunit methyltransferase C (343 aa).

Belongs to the methyltransferase superfamily. RsmC family. Monomer.

The protein localises to the cytoplasm. It catalyses the reaction guanosine(1207) in 16S rRNA + S-adenosyl-L-methionine = N(2)-methylguanosine(1207) in 16S rRNA + S-adenosyl-L-homocysteine + H(+). Functionally, specifically methylates the guanine in position 1207 of 16S rRNA in the 30S particle. This is Ribosomal RNA small subunit methyltransferase C from Escherichia coli O17:K52:H18 (strain UMN026 / ExPEC).